Here is a 62-residue protein sequence, read N- to C-terminus: Large ribosomal subunit protein uL30 (62 aa).

The protein belongs to the universal ribosomal protein uL30 family. Part of the 50S ribosomal subunit.

This is Large ribosomal subunit protein uL30 from Alkalilimnicola ehrlichii (strain ATCC BAA-1101 / DSM 17681 / MLHE-1).